Reading from the N-terminus, the 334-residue chain is Glyceraldehyde-3-phosphate dehydrogenase (334 aa).

NAD(+)-binding positions include 12 to 13 (TI) and Gly111. 140 to 142 (SCN) provides a ligand contact to D-glyceraldehyde 3-phosphate. Residue Cys141 is the Nucleophile of the active site. NAD(+) is bound at residue Arg167. 192–193 (HG) provides a ligand contact to D-glyceraldehyde 3-phosphate. NAD(+) is bound at residue Gln298.

Belongs to the glyceraldehyde-3-phosphate dehydrogenase family. As to quaternary structure, homotetramer.

It is found in the cytoplasm. It carries out the reaction D-glyceraldehyde 3-phosphate + phosphate + NADP(+) = (2R)-3-phospho-glyceroyl phosphate + NADPH + H(+). It catalyses the reaction D-glyceraldehyde 3-phosphate + phosphate + NAD(+) = (2R)-3-phospho-glyceroyl phosphate + NADH + H(+). It participates in carbohydrate degradation; glycolysis; pyruvate from D-glyceraldehyde 3-phosphate: step 1/5. The chain is Glyceraldehyde-3-phosphate dehydrogenase from Thermococcus kodakarensis (strain ATCC BAA-918 / JCM 12380 / KOD1) (Pyrococcus kodakaraensis (strain KOD1)).